Consider the following 170-residue polypeptide: MAYELPQLPYAYDALEPHIDAKTXEIHHSKHHNTYVTNLNAAVEGTEFADKDINDLIAMLDALPADKQTAVRNNGGGHANHTLFWEVIAPGGSNTPVGEVAKAIDAKFGSFDAFKEEFAKAATTRFGSGWAWLIVDGDSVAVTSTPNQDSPVMEGKTPVLGLDVWEHAYY.

His27, His81, Asp163, and His167 together coordinate Fe cation.

This sequence belongs to the iron/manganese superoxide dismutase family. In terms of assembly, homodimer. The cofactor is Fe cation.

The enzyme catalyses 2 superoxide + 2 H(+) = H2O2 + O2. Its function is as follows. Destroys superoxide anion radicals which are normally produced within the cells and which are toxic to biological systems. This Raoultella planticola (Klebsiella planticola) protein is Superoxide dismutase [Fe] (sodA).